A 332-amino-acid polypeptide reads, in one-letter code: MATRAVARRQSATGETADSASSVRAHGGEIADRDLVGMYLDEIARTPLLDAAKEVELSQTIEAGVFAQQVLDGEEESRTDATREELQALVDAGERAKDVFIRSNLRLVVAVARRYPRSGLPLLDLIQEGNAGLVRAVEKFDYRKGFKFSTYATWWIRQAITRSIADQSRTIRLPVHLVEELGRIRRVQREFNREHGRDPEPAEVAAELGSTPERVIDVLDWARDPVSLNMAVDDAGETQFGDLLEDTSAVSPEQSVLTLLRSEELDDLIGRLDQRTASIIKMRYGIDDGRERTLTEVGKEHGLTRERIRQIEKHALLELKKLARDTGFDAAA.

The disordered stretch occupies residues 1 to 25; it reads MATRAVARRQSATGETADSASSVRA. Residues 10–22 show a composition bias toward polar residues; the sequence is QSATGETADSASS. The Polymerase core binding motif lies at 124 to 137; that stretch reads DLIQEGNAGLVRAV. The segment at residues 294–313 is a DNA-binding region (H-T-H motif); that stretch reads LTEVGKEHGLTRERIRQIEK.

The protein belongs to the sigma-70 factor family.

Sigma factors are initiation factors that promote the attachment of RNA polymerase to specific initiation sites and are then released. This chain is RNA polymerase principal sigma factor HrdD (hrdD), found in Streptomyces viridifaciens.